The chain runs to 475 residues: Bifunctional protein HldE (475 aa).

The ribokinase stretch occupies residues 1 to 318; sequence MKVTLPDFER…ENAVRGRAET (318 aa). 195–198 contacts ATP; it reads NLSE. The active site involves Asp264. The cytidylyltransferase stretch occupies residues 344-475; it reads MTNGVFDILH…NIIKKIQKNS (132 aa).

This sequence in the N-terminal section; belongs to the carbohydrate kinase PfkB family. In the C-terminal section; belongs to the cytidylyltransferase family. In terms of assembly, homodimer.

The enzyme catalyses D-glycero-beta-D-manno-heptose 7-phosphate + ATP = D-glycero-beta-D-manno-heptose 1,7-bisphosphate + ADP + H(+). It carries out the reaction D-glycero-beta-D-manno-heptose 1-phosphate + ATP + H(+) = ADP-D-glycero-beta-D-manno-heptose + diphosphate. The protein operates within nucleotide-sugar biosynthesis; ADP-L-glycero-beta-D-manno-heptose biosynthesis; ADP-L-glycero-beta-D-manno-heptose from D-glycero-beta-D-manno-heptose 7-phosphate: step 1/4. It participates in nucleotide-sugar biosynthesis; ADP-L-glycero-beta-D-manno-heptose biosynthesis; ADP-L-glycero-beta-D-manno-heptose from D-glycero-beta-D-manno-heptose 7-phosphate: step 3/4. Catalyzes the phosphorylation of D-glycero-D-manno-heptose 7-phosphate at the C-1 position to selectively form D-glycero-beta-D-manno-heptose-1,7-bisphosphate. In terms of biological role, catalyzes the ADP transfer from ATP to D-glycero-beta-D-manno-heptose 1-phosphate, yielding ADP-D-glycero-beta-D-manno-heptose. The polypeptide is Bifunctional protein HldE (Cronobacter sakazakii (strain ATCC BAA-894) (Enterobacter sakazakii)).